Here is a 337-residue protein sequence, read N- to C-terminus: Glyceraldehyde-3-phosphate dehydrogenase 1, cytosolic (337 aa).

NAD(+) is bound by residues 13–14 (RI), aspartate 35, and arginine 82. Residues 153 to 155 (SCT), threonine 184, 213 to 214 (TG), and arginine 236 contribute to the D-glyceraldehyde 3-phosphate site. Cysteine 154 (nucleophile) is an active-site residue. Asparagine 318 contacts NAD(+).

Belongs to the glyceraldehyde-3-phosphate dehydrogenase family. As to quaternary structure, homotetramer. Phosphorylated after gibberellin treatment.

It localises to the cytoplasm. It carries out the reaction D-glyceraldehyde 3-phosphate + phosphate + NAD(+) = (2R)-3-phospho-glyceroyl phosphate + NADH + H(+). It functions in the pathway carbohydrate degradation; glycolysis; pyruvate from D-glyceraldehyde 3-phosphate: step 1/5. In terms of biological role, key enzyme in glycolysis that catalyzes the first step of the pathway by converting D-glyceraldehyde 3-phosphate (G3P) into 3-phospho-D-glyceroyl phosphate. Essential for the maintenance of cellular ATP levels and carbohydrate metabolism. This is Glyceraldehyde-3-phosphate dehydrogenase 1, cytosolic (GAPC1) from Oryza sativa subsp. japonica (Rice).